A 457-amino-acid chain; its full sequence is Siroheme synthase (457 aa).

Positions 1–204 (MEIFPISLKL…DNLDIANQMM (204 aa)) are precorrin-2 dehydrogenase /sirohydrochlorin ferrochelatase. Residues 22–23 (HI) and 43–44 (PD) contribute to the NAD(+) site. The residue at position 129 (serine 129) is a Phosphoserine. A uroporphyrinogen-III C-methyltransferase region spans residues 216 to 457 (GEVYLVGAGP…VSLREQLQWL (242 aa)). Proline 225 contributes to the S-adenosyl-L-methionine binding site. Aspartate 248 acts as the Proton acceptor in catalysis. Lysine 270 functions as the Proton donor in the catalytic mechanism. Residues 301 to 303 (GGD), isoleucine 306, 331 to 332 (TA), methionine 383, and glycine 412 each bind S-adenosyl-L-methionine.

This sequence in the N-terminal section; belongs to the precorrin-2 dehydrogenase / sirohydrochlorin ferrochelatase family. The protein in the C-terminal section; belongs to the precorrin methyltransferase family.

It catalyses the reaction uroporphyrinogen III + 2 S-adenosyl-L-methionine = precorrin-2 + 2 S-adenosyl-L-homocysteine + H(+). It carries out the reaction precorrin-2 + NAD(+) = sirohydrochlorin + NADH + 2 H(+). The catalysed reaction is siroheme + 2 H(+) = sirohydrochlorin + Fe(2+). It participates in cofactor biosynthesis; adenosylcobalamin biosynthesis; precorrin-2 from uroporphyrinogen III: step 1/1. The protein operates within cofactor biosynthesis; adenosylcobalamin biosynthesis; sirohydrochlorin from precorrin-2: step 1/1. Its pathway is porphyrin-containing compound metabolism; siroheme biosynthesis; precorrin-2 from uroporphyrinogen III: step 1/1. It functions in the pathway porphyrin-containing compound metabolism; siroheme biosynthesis; siroheme from sirohydrochlorin: step 1/1. It participates in porphyrin-containing compound metabolism; siroheme biosynthesis; sirohydrochlorin from precorrin-2: step 1/1. Multifunctional enzyme that catalyzes the SAM-dependent methylations of uroporphyrinogen III at position C-2 and C-7 to form precorrin-2 via precorrin-1. Then it catalyzes the NAD-dependent ring dehydrogenation of precorrin-2 to yield sirohydrochlorin. Finally, it catalyzes the ferrochelation of sirohydrochlorin to yield siroheme. This chain is Siroheme synthase, found in Acinetobacter baylyi (strain ATCC 33305 / BD413 / ADP1).